A 401-amino-acid chain; its full sequence is Argininosuccinate synthase (401 aa).

8–16 (AYSGGLDTS) is an ATP binding site. Tyrosine 85 contacts L-citrulline. Glycine 115 is an ATP binding site. L-aspartate is bound by residues threonine 117, asparagine 121, and aspartate 122. Asparagine 121 contributes to the L-citrulline binding site. 4 residues coordinate L-citrulline: arginine 125, serine 173, glutamate 258, and tyrosine 270.

This sequence belongs to the argininosuccinate synthase family. Type 1 subfamily. As to quaternary structure, homotetramer.

The protein resides in the cytoplasm. The enzyme catalyses L-citrulline + L-aspartate + ATP = 2-(N(omega)-L-arginino)succinate + AMP + diphosphate + H(+). It participates in amino-acid biosynthesis; L-arginine biosynthesis; L-arginine from L-ornithine and carbamoyl phosphate: step 2/3. This Staphylococcus aureus (strain MRSA252) protein is Argininosuccinate synthase.